The following is a 310-amino-acid chain: Ornithine carbamoyltransferase (310 aa).

Carbamoyl phosphate-binding positions include 58-61, Q85, R109, and 136-139; these read STRT and HPCQ. Residues N167, D227, and 231-232 each bind L-ornithine; that span reads SM. Carbamoyl phosphate is bound by residues 266 to 267 and R294; that span reads CL.

Belongs to the aspartate/ornithine carbamoyltransferase superfamily. OTCase family.

The protein localises to the cytoplasm. The enzyme catalyses carbamoyl phosphate + L-ornithine = L-citrulline + phosphate + H(+). The protein operates within amino-acid biosynthesis; L-arginine biosynthesis; L-arginine from L-ornithine and carbamoyl phosphate: step 1/3. Functionally, reversibly catalyzes the transfer of the carbamoyl group from carbamoyl phosphate (CP) to the N(epsilon) atom of ornithine (ORN) to produce L-citrulline. This Rhodopseudomonas palustris (strain ATCC BAA-98 / CGA009) protein is Ornithine carbamoyltransferase.